Reading from the N-terminus, the 506-residue chain is Histidine ammonia-lyase (506 aa).

The segment at residues 143 to 145 (ASG) is a cross-link (5-imidazolinone (Ala-Gly)). A 2,3-didehydroalanine (Ser) modification is found at Ser-144.

The protein belongs to the PAL/histidase family. Post-translationally, contains an active site 4-methylidene-imidazol-5-one (MIO), which is formed autocatalytically by cyclization and dehydration of residues Ala-Ser-Gly.

It is found in the cytoplasm. The catalysed reaction is L-histidine = trans-urocanate + NH4(+). It participates in amino-acid degradation; L-histidine degradation into L-glutamate; N-formimidoyl-L-glutamate from L-histidine: step 1/3. The chain is Histidine ammonia-lyase from Salmonella paratyphi B (strain ATCC BAA-1250 / SPB7).